A 668-amino-acid chain; its full sequence is MQICQTKLNFTFPNPTNPNFCKPKALQWSPPRRISLLPCRGFSSDEFPVDETFLEKFGPKDKDTEDEARRRNWIERGWAPWEEILTPEADFARKSLNEGEEVPLQSPEAIEAFKMLRPSYRKKKIKEMGITEDEWYAKQFEIRGDKPPPLETSWAGPMVLRQIPPRDWPPRGWEVDRKELEFIREAHKLMAERVWLEDLDKDLRVGEDATVDKMCLERFKVFLKQYKEWVEDNKDRLEEESYKLDQDFYPGRRKRGKDYEDGMYELPFYYPGMVCEGTVTTLHLYQGAFVDIGGVHEGWVPIKGNDWFWIRHFIKVGMHVIVEITAKRDPYRFRFPLELRFVHPNIDHMIFNKFDFPPIFHRDGDTNPDEIRRDCGRPPEPRKDPGSKPEEEGLLSDHPYVDKLWQIHVAEQMILGDYEANPAKYEGKKLSELSDDEDFDEQKDIEYGEAYYKKTKLPKVILKTSVKELDLEAALTERQHHNKLMMEAKARGEGYKIDKLRRNIEMDEYDFLHWRRSLEEREALLRDISSRQALGLPLEEPGRYKPGSFFGKDQYDPTSALYQYDYWGEPKNSEISKQERMKDAHNKSIVGKGNVWYDMSYDDAIKQTIEKRKEGSTLASQEEETESEEEEEDDDDFDDFDYSILSDESSIGYSEQQPLVNGTQVLTD.

A chloroplast-targeting transit peptide spans 1-40 (MQICQTKLNFTFPNPTNPNFCKPKALQWSPPRRISLLPCR). The 69-residue stretch at 272–340 (GMVCEGTVTT…YRFRFPLELR (69 aa)) folds into the S1 motif domain. Residues 362–391 (RDGDTNPDEIRRDCGRPPEPRKDPGSKPEE) show a composition bias toward basic and acidic residues. The disordered stretch occupies residues 362 to 394 (RDGDTNPDEIRRDCGRPPEPRKDPGSKPEEEGL). The residue at position 434 (S434) is a Phosphoserine. The segment at 611–668 (KRKEGSTLASQEEETESEEEEEDDDDFDDFDYSILSDESSIGYSEQQPLVNGTQVLTD) is disordered. Over residues 621 to 641 (QEEETESEEEEEDDDDFDDFD) the composition is skewed to acidic residues. Residues 646 to 668 (SDESSIGYSEQQPLVNGTQVLTD) show a composition bias toward polar residues.

In terms of assembly, component of the transcriptionally active chromosome (TAC) complexes. Interacts with PTAC7.

It localises to the plastid. The protein resides in the chloroplast. This is Protein PLASTID TRANSCRIPTIONALLY ACTIVE 10 from Arabidopsis thaliana (Mouse-ear cress).